The chain runs to 211 residues: Uridine kinase (211 aa).

12 to 19 (GGSGSGKT) is an ATP binding site.

This sequence belongs to the uridine kinase family.

Its subcellular location is the cytoplasm. It catalyses the reaction uridine + ATP = UMP + ADP + H(+). The catalysed reaction is cytidine + ATP = CMP + ADP + H(+). The protein operates within pyrimidine metabolism; CTP biosynthesis via salvage pathway; CTP from cytidine: step 1/3. It participates in pyrimidine metabolism; UMP biosynthesis via salvage pathway; UMP from uridine: step 1/1. The polypeptide is Uridine kinase (udk) (Bacillus subtilis (strain 168)).